Consider the following 425-residue polypeptide: Enolase (425 aa).

(2R)-2-phosphoglycerate is bound at residue glutamine 162. Glutamate 204 functions as the Proton donor in the catalytic mechanism. Aspartate 241, glutamate 284, and aspartate 311 together coordinate Mg(2+). 4 residues coordinate (2R)-2-phosphoglycerate: lysine 336, arginine 365, serine 366, and lysine 387. Residue lysine 336 is the Proton acceptor of the active site.

This sequence belongs to the enolase family. Mg(2+) is required as a cofactor.

It localises to the cytoplasm. The protein resides in the secreted. Its subcellular location is the cell surface. It catalyses the reaction (2R)-2-phosphoglycerate = phosphoenolpyruvate + H2O. It participates in carbohydrate degradation; glycolysis; pyruvate from D-glyceraldehyde 3-phosphate: step 4/5. Functionally, catalyzes the reversible conversion of 2-phosphoglycerate (2-PG) into phosphoenolpyruvate (PEP). It is essential for the degradation of carbohydrates via glycolysis. In Brucella ovis (strain ATCC 25840 / 63/290 / NCTC 10512), this protein is Enolase.